The primary structure comprises 263 residues: Transmembrane protein 176B (263 aa).

The next 4 membrane-spanning stretches (helical) occupy residues 61-81 (LGVTQILLGLVSCALGVCLYF), 89-109 (AFGCAFWSGSVAILAGVGTIV), 121-141 (VSCLLLLACIATAAAATVLGV), and 197-217 (LFLAFCIMLTVVCILEIVVSV). 3 positions are modified to phosphoserine: serine 231, serine 240, and serine 253. Residues 239-263 (ESERKLLDGHPAPASPAKEKIPAIL) form a disordered region.

This sequence belongs to the TMEM176 family. As to expression, ubiquitously expressed with higher expression in lung, liver, kidney and colon. Expressed in cerebellar granule cells.

It is found in the nucleus membrane. May play a role in the process of maturation of dendritic cells. Required for the development of cerebellar granule cells. This Mus musculus (Mouse) protein is Transmembrane protein 176B (Tmem176b).